The following is a 553-amino-acid chain: Mucolipin-3 (553 aa).

Residues 1-62 (MANPEVLVSS…FWARGRKPWK (62 aa)) are Cytoplasmic-facing. The segment at 52-62 (KFWARGRKPWK) is interaction with phosphoinositides. A helical membrane pass occupies residues 63–83 (LAIQILKIAMVTIQLVLFGLS). At 84 to 283 (NQMVVAFKEE…VSGSIQKNTH (200 aa)) the chain is on the extracellular side. An extracellular/lumenal pore loop region spans residues 104-118 (KGYMDRMDDTYAVYT). The N-linked (GlcNAc...) asparagine glycan is linked to asparagine 138. Cysteines 159 and 185 form a disulfide. Residue asparagine 205 is glycosylated (N-linked (GlcNAc...) asparagine). A disulfide bond links cysteine 238 and cysteine 269. Residues 284–304 (YMMIFDAFVILTCLASLVLCA) form a helical membrane-spanning segment. The Cytoplasmic portion of the chain corresponds to 305–341 (RSVIRGLQLQQEFVNFFLLHYKKEVSASDQMEFINGW). A helical membrane pass occupies residues 342-362 (YIMIIISDILTIVGSVLKMEI). At 363 to 371 (QAKSLTSYD) the chain is on the extracellular side. A helical transmembrane segment spans residues 372 to 392 (VCSILLGTSTMLVWLGVIRYL). At 393-414 (GFFAKYNLLILTLQAALPNVMR) the chain is on the cytoplasmic side. Residues 415 to 435 (FCCCAAMIYLGYCFCGWIVLG) form a helical membrane-spanning segment. The Extracellular segment spans residues 436–443 (PYHEKFRS). Residues 444 to 464 (LNRVSECLFSLINGDDMFSTF) constitute an intramembrane region (pore-forming). A Selectivity filter motif is present at residues 456–459 (NGDD). Over 465 to 475 (AKMQQKSYLVW) the chain is Extracellular. Residues 476–497 (LFSRVYLYSFISLFIYMILSLF) form a helical membrane-spanning segment. The Cytoplasmic segment spans residues 498–553 (IALITDTYETIKHYQQDGFPETELRKFIAECKDLPNSGKYRLEDDPPGSLLCCCKK).

It belongs to the transient receptor (TC 1.A.4) family. Polycystin subfamily. MCOLN3 sub-subfamily. As to quaternary structure, homotetramer. Can heterooligomerize with MCOLN1; heteromeric assemblies have different channel properties as compared to the respective homooligomers and may be tissue-specific. May heterooligomerize with TRPV5 to form a functional distinct ion channel. Interacts with GABARAPL2. In terms of processing, N-glycosylated. Expressed in the cochlea; particularly in the inner and outer hair cells (at protein level).

Its subcellular location is the early endosome membrane. The protein localises to the late endosome membrane. It localises to the cytoplasmic vesicle. It is found in the autophagosome membrane. The protein resides in the cell projection. Its subcellular location is the stereocilium membrane. It catalyses the reaction Ca(2+)(in) = Ca(2+)(out). The enzyme catalyses Mg(2+)(in) = Mg(2+)(out). The catalysed reaction is K(+)(in) = K(+)(out). It carries out the reaction Na(+)(in) = Na(+)(out). Channel activity is activated by PtdIns(3,5)P2 (phosphatidylinositol 3,5-bisphosphate). Inhibited by lumenal H(+) and Na(+). The channel pore shows dynamic behavior and undergoes spontaneous, Ca(2+)-dependent modulation when conducting Ca(2+). Nonselective cation channel probably playing a role in the regulation of membrane trafficking events. Acts as a Ca(2+)-permeable cation channel with inwardly rectifying activity. Mediates release of Ca(2+) from endosomes to the cytoplasm, contributes to endosomal acidification and is involved in the regulation of membrane trafficking and fusion in the endosomal pathway. Also permeable to Mg(2+), Na(+) and K(+). Does not seem to act as mechanosensory transduction channel in inner ear sensory hair cells. Proposed to play a critical role at the cochlear stereocilia ankle-link region during hair-bundle growth. Involved in the regulation of autophagy. Through association with GABARAPL2 may be involved in autophagosome formation possibly providing Ca(2+) for the fusion process. Through a possible and probably tissue-specific heteromerization with MCOLN1 may be at least in part involved in many lysosome-dependent cellular events. Possible heteromeric ion channel assemblies with TRPV5 show pharmacological similarity with TRPML3. This is Mucolipin-3 (Mcoln3) from Mus musculus (Mouse).